The following is a 392-amino-acid chain: MAEQELRNYHLNFGPQHPAAHGVLRLVLELDGEVVERVDPHIGLLHRGTEKLIEYKTYLQATPYFDRLDYVAPMNQEHAFVLAAERLLGLEVPRRAQFIRVLYSEIGRILAHLLNVTTQAMDVGALTPPLWGFEEREKLMIFYERASGARLHANYFRTGGVHRDLPPKLLEDIYNFCDPCSQVLDDLEGLITDNRIFKQRNVDIGVVSQEEALEWGFSGVMVRGSGMAWDLRRAQPYEVYSELDFDIPVGKNGDCYDRYLCRMEEMRQSLRIMKQCIELMPGGPVHVLDGKVVPPSRSEMKRSMEALIHHFKLYTEGYHVPAGEVYAAVEAPKGEFGVYLVSDGGNKPYKCKIRAPGYAHLQAMDHLCKGHMLADVSAILGSIDIVFGEVDR.

Belongs to the complex I 49 kDa subunit family. NDH-1 is composed of 14 different subunits. Subunits NuoB, C, D, E, F, and G constitute the peripheral sector of the complex.

The protein resides in the cell inner membrane. The enzyme catalyses a quinone + NADH + 5 H(+)(in) = a quinol + NAD(+) + 4 H(+)(out). Functionally, NDH-1 shuttles electrons from NADH, via FMN and iron-sulfur (Fe-S) centers, to quinones in the respiratory chain. The immediate electron acceptor for the enzyme in this species is believed to be ubiquinone. Couples the redox reaction to proton translocation (for every two electrons transferred, four hydrogen ions are translocated across the cytoplasmic membrane), and thus conserves the redox energy in a proton gradient. This chain is NADH-quinone oxidoreductase subunit D, found in Parvibaculum lavamentivorans (strain DS-1 / DSM 13023 / NCIMB 13966).